The primary structure comprises 145 residues: D-aminoacyl-tRNA deacylase (145 aa).

Residues 137–138 carry the Gly-cisPro motif, important for rejection of L-amino acids motif; that stretch reads GP.

This sequence belongs to the DTD family. Homodimer.

It is found in the cytoplasm. The enzyme catalyses glycyl-tRNA(Ala) + H2O = tRNA(Ala) + glycine + H(+). It carries out the reaction a D-aminoacyl-tRNA + H2O = a tRNA + a D-alpha-amino acid + H(+). Its function is as follows. An aminoacyl-tRNA editing enzyme that deacylates mischarged D-aminoacyl-tRNAs. Also deacylates mischarged glycyl-tRNA(Ala), protecting cells against glycine mischarging by AlaRS. Acts via tRNA-based rather than protein-based catalysis; rejects L-amino acids rather than detecting D-amino acids in the active site. By recycling D-aminoacyl-tRNA to D-amino acids and free tRNA molecules, this enzyme counteracts the toxicity associated with the formation of D-aminoacyl-tRNA entities in vivo and helps enforce protein L-homochirality. The protein is D-aminoacyl-tRNA deacylase of Colwellia psychrerythraea (strain 34H / ATCC BAA-681) (Vibrio psychroerythus).